Here is a 1217-residue protein sequence, read N- to C-terminus: DNA-directed RNA polymerase subunit beta' (1217 aa).

Zn(2+) is bound by residues cysteine 60, cysteine 62, cysteine 75, and cysteine 78. Aspartate 449, aspartate 451, and aspartate 453 together coordinate Mg(2+). Zn(2+) contacts are provided by cysteine 821, cysteine 895, cysteine 902, and cysteine 905.

It belongs to the RNA polymerase beta' chain family. In terms of assembly, the RNAP catalytic core consists of 2 alpha, 1 beta, 1 beta' and 1 omega subunit. When a sigma factor is associated with the core the holoenzyme is formed, which can initiate transcription. The cofactor is Mg(2+). Requires Zn(2+) as cofactor.

It catalyses the reaction RNA(n) + a ribonucleoside 5'-triphosphate = RNA(n+1) + diphosphate. Its function is as follows. DNA-dependent RNA polymerase catalyzes the transcription of DNA into RNA using the four ribonucleoside triphosphates as substrates. The polypeptide is DNA-directed RNA polymerase subunit beta' (Lactobacillus helveticus (strain DPC 4571)).